The sequence spans 394 residues: Obg-like ATPase 1 (394 aa).

The region spanning leucine 25–cysteine 282 is the OBG-type G domain. ATP contacts are provided by residues asparagine 34–threonine 39, phenylalanine 56–aspartate 60, and aspartate 94–glycine 97. Asparagine 34–threonine 39 provides a ligand contact to GTP. Residues serine 38 and threonine 58 each coordinate Mg(2+). Positions 129 and 230 each coordinate GTP. Residues asparagine 230–methionine 231, methionine 231, and serine 263–alanine 265 each bind ATP. Residue serine 263–alanine 265 coordinates GTP. Residues histidine 303–phenylalanine 386 form the TGS domain.

It belongs to the TRAFAC class OBG-HflX-like GTPase superfamily. OBG GTPase family. YchF/OLA1 subfamily. Monomer (Potential). Interacts with GAP1. Requires Mg(2+) as cofactor.

It localises to the cell membrane. The protein resides in the cytoplasm. Its subcellular location is the cytosol. With respect to regulation, activated by GAP1. Hydrolyzes ATP, and can also hydrolyze GTP with lower efficiency. Has lower affinity for GTP (Potential). Exhibits GTPase activity. Exhibits similar binding affinities and hydrolytic activities toward both GTP and ATP. Binds to the 26 S ribosomal RNA in vitro, but not to the 5.8 S or 18 S rRNA. Confers sensitivity to salinity stress by suppressing the anti-oxidation enzymatic activities and increasing lipid peroxidation thus leading to the accumulation of reactive oxygen species (ROS). The polypeptide is Obg-like ATPase 1 (Oryza sativa subsp. japonica (Rice)).